The primary structure comprises 230 residues: Ion-translocating oxidoreductase complex subunit E (230 aa).

Helical transmembrane passes span 18-38 (ALVQ…ATNA), 39-59 (LGLG…VSAL), 63-83 (TPAE…VSAV), 86-106 (LINA…PLIV), 125-145 (WLSA…MFVL), and 182-202 (PFLL…MLAV).

This sequence belongs to the NqrDE/RnfAE family. In terms of assembly, the complex is composed of six subunits: RsxA, RsxB, RsxC, RsxD, RsxE and RsxG.

It localises to the cell inner membrane. In terms of biological role, part of a membrane-bound complex that couples electron transfer with translocation of ions across the membrane. Required to maintain the reduced state of SoxR. This chain is Ion-translocating oxidoreductase complex subunit E, found in Salmonella agona (strain SL483).